The sequence spans 288 residues: Phosphatidate cytidylyltransferase (288 aa).

The next 7 helical transmembrane spans lie at 10–30 (IVLIAAVLCALFLFTPFYFAL), 52–72 (PLIRFFVTTFLGVFIFLWLYT), 89–109 (LLLINAVSWWGLALLLVISYP), 118–138 (NPLLQLLFAFSTLIPFVAGVL), 152–172 (GLFLLLYVFILVWAADSGAYF), 192–212 (WEGVIGGLITALVLAFIFIHF), and 223–243 (ITGFIILSVATVAISVLGDLT).

Belongs to the CDS family.

It localises to the cell inner membrane. It carries out the reaction a 1,2-diacyl-sn-glycero-3-phosphate + CTP + H(+) = a CDP-1,2-diacyl-sn-glycerol + diphosphate. Its pathway is phospholipid metabolism; CDP-diacylglycerol biosynthesis; CDP-diacylglycerol from sn-glycerol 3-phosphate: step 3/3. The protein is Phosphatidate cytidylyltransferase (cdsA) of Haemophilus influenzae (strain ATCC 51907 / DSM 11121 / KW20 / Rd).